Here is a 499-residue protein sequence, read N- to C-terminus: Maturase K (499 aa).

Belongs to the intron maturase 2 family. MatK subfamily.

The protein localises to the plastid. It localises to the chloroplast. Usually encoded in the trnK tRNA gene intron. Probably assists in splicing its own and other chloroplast group II introns. The sequence is that of Maturase K from Chamaecrista fasciculata (Showy partridge pea).